The primary structure comprises 303 residues: MDKYNLIIGSHVSLKAKDFFYGSVKEALSYGSNTFMVYTGAPQNTKRQPIKSFKIEEAHNLLKKHNINLDDLIVHAPYIINPCSSKKNVRELAKEFLIQEIQRTESMGITKLVLHPGSRLEQNEDIALEQVYTMLNDIFSTINTNVIVCLETMAGKGSEIGVNIKQLKTIIDNVHSKKNIGVCLDTCHMNDSGLILDYYNFNQYLKEFDAQIGINYIKVLHINDSKNPCGANKDRHENLGYGTIGFANLINIIYHPLLNNIPKILETPWFNVNDELIPLYKHEIKMIRDCKWYDIKNKLLSKK.

Residues His75, His115, Glu151, Asp185, His188, His221, Asp234, His236, and Glu266 each coordinate Zn(2+).

Belongs to the AP endonuclease 2 family. It depends on Zn(2+) as a cofactor.

It catalyses the reaction Endonucleolytic cleavage to 5'-phosphooligonucleotide end-products.. Functionally, endonuclease IV plays a role in DNA repair. It cleaves phosphodiester bonds at apurinic or apyrimidinic (AP) sites, generating a 3'-hydroxyl group and a 5'-terminal sugar phosphate. The chain is Probable endonuclease 4 from Ureaplasma parvum serovar 3 (strain ATCC 700970).